The following is a 932-amino-acid chain: Eukaryotic translation initiation factor 3 subunit A (932 aa).

Positions 309-492 (KPATANFVIL…NSISFSSDLF (184 aa)) constitute a PCI domain. 2 positions are modified to phosphoserine: Ser-374 and Ser-501. Positions 537-862 (LRKQQAEAAY…DEEISRKLAE (326 aa)) form a coiled coil. Basic and acidic residues predominate over residues 793-865 (AEEEAARAAE…ISRKLAEKAA (73 aa)). Positions 793–932 (AEEEAARAAE…PPSRRNQQQQ (140 aa)) are disordered. Phosphoserine is present on residues Ser-874, Ser-875, and Ser-877. Positions 877 to 893 (SPGAWRRGGASAGGVSR) are enriched in low complexity.

The protein belongs to the eIF-3 subunit A family. As to quaternary structure, component of the eukaryotic translation initiation factor 3 (eIF-3) complex. The eIF-3 complex appears to include tif32/eif3a, SPAC25G10.08/eif3b, tif33/eif3c, SPBC4C3.07/eif3f, tif35/eif3g and sum1/eif3i. This set of common subunits may also associate exclusively with either moe1/eif3d and int6/eif3e, or with SPAC821.05/eif3h and SPAC1751.03/eif3m. The eIF-3 complex may also include SPAC3A12.13c/eif3j.

The protein resides in the cytoplasm. Its function is as follows. RNA-binding component of the eukaryotic translation initiation factor 3 (eIF-3) complex, which is involved in protein synthesis of a specialized repertoire of mRNAs and, together with other initiation factors, stimulates binding of mRNA and methionyl-tRNAi to the 40S ribosome. The eIF-3 complex specifically targets and initiates translation of a subset of mRNAs involved in cell proliferation. The protein is Eukaryotic translation initiation factor 3 subunit A (tif32) of Schizosaccharomyces pombe (strain 972 / ATCC 24843) (Fission yeast).